We begin with the raw amino-acid sequence, 152 residues long: Large ribosomal subunit protein uL22 (152 aa).

Over residues 124–143 (APTKAASKKAAPAKQTTPAA) the composition is skewed to low complexity. A disordered region spans residues 124-152 (APTKAASKKAAPAKQTTPAATESKTEGAE).

This sequence belongs to the universal ribosomal protein uL22 family. Part of the 50S ribosomal subunit.

In terms of biological role, this protein binds specifically to 23S rRNA; its binding is stimulated by other ribosomal proteins, e.g. L4, L17, and L20. It is important during the early stages of 50S assembly. It makes multiple contacts with different domains of the 23S rRNA in the assembled 50S subunit and ribosome. Functionally, the globular domain of the protein is located near the polypeptide exit tunnel on the outside of the subunit, while an extended beta-hairpin is found that lines the wall of the exit tunnel in the center of the 70S ribosome. The polypeptide is Large ribosomal subunit protein uL22 (Salinispora arenicola (strain CNS-205)).